Here is a 404-residue protein sequence, read N- to C-terminus: Phosphopentomutase (404 aa).

Mn(2+) is bound by residues D10, D303, H308, D344, H345, and H356.

The protein belongs to the phosphopentomutase family. Requires Mn(2+) as cofactor.

The protein resides in the cytoplasm. The enzyme catalyses 2-deoxy-alpha-D-ribose 1-phosphate = 2-deoxy-D-ribose 5-phosphate. The catalysed reaction is alpha-D-ribose 1-phosphate = D-ribose 5-phosphate. Its pathway is carbohydrate degradation; 2-deoxy-D-ribose 1-phosphate degradation; D-glyceraldehyde 3-phosphate and acetaldehyde from 2-deoxy-alpha-D-ribose 1-phosphate: step 1/2. Isomerase that catalyzes the conversion of deoxy-ribose 1-phosphate (dRib-1-P) and ribose 1-phosphate (Rib-1-P) to deoxy-ribose 5-phosphate (dRib-5-P) and ribose 5-phosphate (Rib-5-P), respectively. This Shewanella sp. (strain ANA-3) protein is Phosphopentomutase.